The primary structure comprises 258 residues: Glutamate racemase (258 aa).

Substrate is bound by residues 11–12 (DS) and 43–44 (YG). Cys74 acts as the Proton donor/acceptor in catalysis. 75–76 (NT) contributes to the substrate binding site. The active-site Proton donor/acceptor is Cys187. Position 188–189 (188–189 (TH)) interacts with substrate.

This sequence belongs to the aspartate/glutamate racemases family.

It catalyses the reaction L-glutamate = D-glutamate. Its pathway is cell wall biogenesis; peptidoglycan biosynthesis. Its function is as follows. Provides the (R)-glutamate required for cell wall biosynthesis. The chain is Glutamate racemase from Bifidobacterium animalis subsp. lactis (strain AD011).